Consider the following 215-residue polypeptide: HTH-type transcriptional regulator AcrR (215 aa).

Positions 10–70 (QETRQHILDV…EIWELSESNI (61 aa)) constitute an HTH tetR-type domain. The H-T-H motif DNA-binding region spans 33 to 52 (SLGEIAKAAGVTRGAIYWHF).

Potential regulator protein for the acrAB genes. The protein is HTH-type transcriptional regulator AcrR (acrR) of Shigella flexneri.